The chain runs to 369 residues: 4-hydroxy-3-methylbut-2-en-1-yl diphosphate synthase (flavodoxin) (369 aa).

[4Fe-4S] cluster is bound by residues C268, C271, C303, and E310.

Belongs to the IspG family. Requires [4Fe-4S] cluster as cofactor.

The catalysed reaction is (2E)-4-hydroxy-3-methylbut-2-enyl diphosphate + oxidized [flavodoxin] + H2O + 2 H(+) = 2-C-methyl-D-erythritol 2,4-cyclic diphosphate + reduced [flavodoxin]. It functions in the pathway isoprenoid biosynthesis; isopentenyl diphosphate biosynthesis via DXP pathway; isopentenyl diphosphate from 1-deoxy-D-xylulose 5-phosphate: step 5/6. In terms of biological role, converts 2C-methyl-D-erythritol 2,4-cyclodiphosphate (ME-2,4cPP) into 1-hydroxy-2-methyl-2-(E)-butenyl 4-diphosphate. The chain is 4-hydroxy-3-methylbut-2-en-1-yl diphosphate synthase (flavodoxin) from Exiguobacterium sibiricum (strain DSM 17290 / CCUG 55495 / CIP 109462 / JCM 13490 / 255-15).